The primary structure comprises 500 residues: Kynurenine 3-monooxygenase acdD (500 aa).

FAD-binding positions include Val17 and Glu36 to Arg38. An N-linked (GlcNAc...) asparagine glycan is attached at Asn50. FAD is bound at residue Ala58. Residues Arg89 and Tyr106 each coordinate L-kynurenine. Residues Arg118 and Leu143 each coordinate FAD. The N-linked (GlcNAc...) asparagine glycan is linked to Asn163. FAD contacts are provided by residues Asp321 and Gln332 to Asn335. Positions 392 and 428 each coordinate L-kynurenine. The helical transmembrane segment at Leu451–Ala471 threads the bilayer.

The protein belongs to the aromatic-ring hydroxylase family. KMO subfamily. FAD serves as cofactor.

The protein localises to the mitochondrion outer membrane. The enzyme catalyses L-kynurenine + NADPH + O2 + H(+) = 3-hydroxy-L-kynurenine + NADP(+) + H2O. The protein operates within secondary metabolite biosynthesis. It participates in cofactor biosynthesis; NAD(+) biosynthesis; quinolinate from L-kynurenine: step 1/3. Its function is as follows. Indoleamine 2,3-dioxygenase; part of the gene cluster that mediates the biosynthesis of aspcandine, a pyrrolobenzazepine alkaloid. Initially, the indoleamine 2,3-dioxygenase acdA accepts L-tryptophan and performs the oxidative opening of the indole ring to yield N'-formyl-L-kynurenine, which undergoes the spontaneous deformylation reaction to provide L-kynurenine. The kynurenine 3-monooxygenase acdD then hydroxylates L-kynurenine to afford 3-hydroxy-L-kynurenine. 3-hydroxy-L-kynurenine is activated by the A domain of the NRPS-PKS acdB and subsequently loaded onto the enzyme. The KS domain conducts the decarboxylative condensation of the 3-hydroxy-L-kynurenyl and malonyl moieties, and subsequent nucleophilic attacks by the two amino groups would occur nonenzymatically at two distinct positions, achieving the chain release and the construction of the tricyclic system. Finally, the dehydration reaction completes the biosynthesis to yield aspcandine. This Aspergillus candidus protein is Kynurenine 3-monooxygenase acdD.